The following is a 134-amino-acid chain: UPF0412 protein YaaI (134 aa).

Residues 1–23 (MKSVITISASLAISLMLCCTAQA) form the signal peptide.

The protein belongs to the UPF0412 family.

This chain is UPF0412 protein YaaI, found in Escherichia coli (strain UTI89 / UPEC).